We begin with the raw amino-acid sequence, 413 residues long: CinA-like protein (413 aa).

Belongs to the CinA family.

The protein is CinA-like protein of Geobacter metallireducens (strain ATCC 53774 / DSM 7210 / GS-15).